Reading from the N-terminus, the 158-residue chain is Succinate dehydrogenase [ubiquinone] cytochrome b small subunit, mitochondrial (158 aa).

The N-terminal 55 residues, 1–55, are a transit peptide targeting the mitochondrion; it reads MALWRLSVLCGAREGRALFLRTPVVRPALVSAFLQDRPAQGWCGTQHIHLSPSHH. The Mitochondrial matrix segment spans residues 56-62; that stretch reads SGSKAAS. Residues 63–84 traverse the membrane as a helical segment; it reads LHWTGERVVSVLLLGLIPAAYL. Residues 85-89 lie on the Mitochondrial intermembrane side of the membrane; sequence NPCSA. The chain crosses the membrane as a helical span at residues 90-110; it reads MDYSLAATLTLHSHWGIGQVV. Position 101 (His101) interacts with heme b. Topologically, residues 111–119 are mitochondrial matrix; it reads TDYVHGDAV. Tyr113 serves as a coordination point for a ubiquinone. A helical membrane pass occupies residues 120-141; that stretch reads QKAAKTGLLVLSAFTFAGLCYF. Residues 142 to 158 are Mitochondrial intermembrane-facing; it reads NYHDVGICKAVAMLWKL.

This sequence belongs to the CybS family. Component of complex II composed of four subunits: the flavoprotein (FP) SDHA, iron-sulfur protein (IP) SDHB, and a cytochrome b560 composed of SDHC and SDHD.

It is found in the mitochondrion inner membrane. It participates in carbohydrate metabolism; tricarboxylic acid cycle. Functionally, membrane-anchoring subunit of succinate dehydrogenase (SDH) that is involved in complex II of the mitochondrial electron transport chain and is responsible for transferring electrons from succinate to ubiquinone (coenzyme Q). SDH also oxidizes malate to the non-canonical enol form of oxaloacetate, enol-oxaloacetate. Enol-oxaloacetate, which is a potent inhibitor of the succinate dehydrogenase activity, is further isomerized into keto-oxaloacetate. This Bos taurus (Bovine) protein is Succinate dehydrogenase [ubiquinone] cytochrome b small subunit, mitochondrial (SDHD).